The sequence spans 130 residues: Small ribosomal subunit protein uS11 (130 aa).

This sequence belongs to the universal ribosomal protein uS11 family. As to quaternary structure, part of the 30S ribosomal subunit. Interacts with proteins S7 and S18. Binds to IF-3.

In terms of biological role, located on the platform of the 30S subunit, it bridges several disparate RNA helices of the 16S rRNA. Forms part of the Shine-Dalgarno cleft in the 70S ribosome. The protein is Small ribosomal subunit protein uS11 of Campylobacter lari (strain RM2100 / D67 / ATCC BAA-1060).